Here is a 186-residue protein sequence, read N- to C-terminus: PR-toxin biosynthesis cluster protein 7 (186 aa).

The chain crosses the membrane as a helical span at residues 24–43; that stretch reads LGEVTTGGVTPRGTFIFCPI.

It localises to the membrane. Its pathway is sesquiterpene biosynthesis. Its function is as follows. Part of the gene cluster that mediates the biosynthesis of PR-toxin, a bicyclic sesquiterpene belonging to the eremophilane class and acting as a mycotoxin. The first step of the pathway is catalyzed by the aristolochene synthase which performs the cyclization of trans,trans-farnesyl diphosphate (FPP) to the bicyclic sesquiterpene aristolochene. Following the formation of aristolochene, the non-oxygenated aristolochene is converted to the trioxygenated intermediate eremofortin B, via 7-epi-neopetasone. This conversion appears to involve three enzymes, a hydroxysterol oxidase-like enzyme, the quinone-oxidase prx3 that forms the quinone-type-structure in the bicyclic nucleus of aristolochene with the C8-oxo group and the C-3 hydroxyl group, and the P450 monooxygenase ORF6 that introduces the epoxide at the double bond between carbons 1 and 2. No monoxy or dioxy-intermediates have been reported to be released to the broth, so these three early oxidative reactions may be coupled together. Eremofortin B is further oxidized by another P450 monooxygenase, that introduces a second epoxide between carbons 7 and 11 prior to acetylation to eremofortin A by the acetyltransferase ORF8. The second epoxidation may be performed by a second P450 monooxygenase. After the acetylation step, eremofortin A is converted to eremofortin C and then to PR-toxin. First the conversion of eremofortin A to eremofortin C proceeds by oxidation of the side chain of the molecule at C-12 and is catalyzed by the short-chain oxidoreductase prx1. The cytochrome P450 monooxygenase ORF6 is probably also involved in this step. The primary alcohol formed at C-12 is finally oxidized by the short-chain alcohol dehydrogenase prx4 that forms PR-toxin. This Penicillium roqueforti (strain FM164) protein is PR-toxin biosynthesis cluster protein 7.